Reading from the N-terminus, the 453-residue chain is CCA-adding enzyme (453 aa).

Residues S53 and K56 each coordinate ATP. 2 residues coordinate CTP: S53 and K56. Residues D65, D67, and D119 each contribute to the Mg(2+) site. Positions 142, 161, and 170 each coordinate ATP. CTP is bound by residues H142, K161, and Y170.

It belongs to the tRNA nucleotidyltransferase/poly(A) polymerase family. Archaeal CCA-adding enzyme subfamily. As to quaternary structure, homodimer. The cofactor is Mg(2+).

It catalyses the reaction a tRNA precursor + 2 CTP + ATP = a tRNA with a 3' CCA end + 3 diphosphate. The catalysed reaction is a tRNA with a 3' CCA end + 2 CTP + ATP = a tRNA with a 3' CCACCA end + 3 diphosphate. Functionally, catalyzes the addition and repair of the essential 3'-terminal CCA sequence in tRNAs without using a nucleic acid template. Adds these three nucleotides in the order of C, C, and A to the tRNA nucleotide-73, using CTP and ATP as substrates and producing inorganic pyrophosphate. tRNA 3'-terminal CCA addition is required both for tRNA processing and repair. Also involved in tRNA surveillance by mediating tandem CCA addition to generate a CCACCA at the 3' terminus of unstable tRNAs. While stable tRNAs receive only 3'-terminal CCA, unstable tRNAs are marked with CCACCA and rapidly degraded. This Pyrococcus furiosus (strain ATCC 43587 / DSM 3638 / JCM 8422 / Vc1) protein is CCA-adding enzyme.